The following is a 448-amino-acid chain: NADP-specific glutamate dehydrogenase (448 aa).

Residues K88, Q109, and K112 each coordinate substrate. The Proton donor role is filled by K124. G163 is a binding site for substrate. Residues T207 and N238 each coordinate NADP(+). S381 contacts substrate.

This sequence belongs to the Glu/Leu/Phe/Val dehydrogenases family. Homohexamer.

The catalysed reaction is L-glutamate + NADP(+) + H2O = 2-oxoglutarate + NH4(+) + NADPH + H(+). Its function is as follows. Catalyzes the reversible oxidative deamination of glutamate to alpha-ketoglutarate and ammonia. The chain is NADP-specific glutamate dehydrogenase (gdhA) from Helicobacter pylori (strain ATCC 700392 / 26695) (Campylobacter pylori).